We begin with the raw amino-acid sequence, 494 residues long: Transcriptional regulator calD (494 aa).

The protein localises to the nucleus. Its function is as follows. Transcription co-regulator that might be involved in the regulation of the expression of the gene cluster that mediates the biosynthesis of calbistrins and related compounds such as decumbenones. Calbistrin A is a secondary metabolite with an interesting structure that was recently found to have bioactivity against leukemia cells. It consists of two polyketides linked by an ester bond: a bicyclic decalin containing polyketide and a linear 12 carbon dioic acid structure. This is Transcriptional regulator calD from Penicillium decumbens.